A 161-amino-acid polypeptide reads, in one-letter code: Allophycocyanin alpha-B chain (161 aa).

Asn-71 bears the N4-methylasparagine mark. Cys-81 provides a ligand contact to (2R,3E)-phycocyanobilin.

Belongs to the phycobiliprotein family. In terms of processing, contains one covalently linked bilin chromophore.

Its subcellular location is the plastid. The protein resides in the chloroplast thylakoid membrane. Functionally, allophycocyanin is a photosynthetic bile pigment-protein complex with maximum absorption at approximately 650 nanometers. The polypeptide is Allophycocyanin alpha-B chain (apcD) (Pyropia yezoensis (Susabi-nori)).